Consider the following 104-residue polypeptide: MNRDHFYTLNIAEIAERIGNDDCAYQVLMAFINENGEAQMLNKTAVAEMIQLSKPTVFATVNSFYCAGYIDETRVGRSKIYTLSDLGVEIVECFKQKAMEMRNL.

2 consecutive DNA-binding regions (HTH) follow at residues Lys43–Ile50 and Lys54–Tyr65.

As to quaternary structure, homodimer. Binds to tubC DNA, the TubR-DNA complex binds to TubZ.

Functionally, a DNA-binding protein that is part of the type III plasmid partition system used to ensure correct segregation of the pBtoxis plasmid. Cooperatively binds to the centromere-like site (tubC), which may seed filament formation by the TubZ polymerizing GTPase, stabilizing TubZ filaments. TubR-tubC complexes track the depolymerizing minus end of the filament, probably pulling plasmid within the cell. Required for plasmid replication. Negatively regulates levels of TubZ; its effect on RNA expression has not been shown. Specifically binds iterons, 12-bp imperfect direct repeats that function as a plasmid origin of replication. Four TubR dimers bind to tubC, forming an extended bent DNA-protein filament with protein wrapping helically around the outside of the DNA. The polypeptide is DNA-binding transcriptional repressor TubR (Bacillus thuringiensis subsp. israelensis).